Reading from the N-terminus, the 363-residue chain is MARFWTEAPHRHGSTARTGILLVNLGTPVAPTAAALRPYLQQFLSDPRVVEIPRAVWLPLLNGVILNTRPRKSAAKYASIWTDEGSPLAVHTRRQAELIAARFASRDDVRVDWAMRYGAPAVADKLGALRAAGCTRILVVPMYPQYAASTTASVMDEVARCLQHWRNLPELRFVRSFHDDPGYIGALAASVREHWTRHGQPDRLLMSFHGLPRYTLERGDPYHCECHRTARLLAESLGLAPERVIVSFQSRFGRTRWLEPYTQPTLEALARDGVGRVDVMCPGFVADCLETLEEIAMECRAAFLGAGGREFHYIPCLNERPDWIDALERRVRSEAGNWLTATPPTDAEREAARGRALALGAAE.

His-209 and Glu-290 together coordinate Fe cation.

It belongs to the ferrochelatase family.

It is found in the cytoplasm. It catalyses the reaction heme b + 2 H(+) = protoporphyrin IX + Fe(2+). The protein operates within porphyrin-containing compound metabolism; protoheme biosynthesis; protoheme from protoporphyrin-IX: step 1/1. Catalyzes the ferrous insertion into protoporphyrin IX. The protein is Ferrochelatase of Azoarcus sp. (strain BH72).